The primary structure comprises 1061 residues: Chimeric ERCC6-PGBD3 protein (1061 aa).

The disordered stretch occupies residues 1 to 39 (MPNEGIPHSSQTQEQDCLQSQPVSNNEEMAIKQESGGDG). Over residues 8–27 (HSSQTQEQDCLQSQPVSNNE) the composition is skewed to polar residues. Residue Ser158 is modified to Phosphoserine. Lys255 participates in a covalent cross-link: Glycyl lysine isopeptide (Lys-Gly) (interchain with G-Cter in SUMO2). Disordered stretches follow at residues 287–323 (KQGCNKRAARKAPAPVTPPAPVQNKNKPNKKARVLSK), 344–466 (GKVG…QRLS), 494–521 (VIQPPENATAPVSDEESGDEEGGTINNL), and 537–573 (SDAESDSDDPSYAPKDDSPDEVPSTFTVQQPPPSRRR). Over residues 353–363 (RPWESDMRPEA) the composition is skewed to basic and acidic residues. The segment covering 364–392 (EGDSEGEESEYFPTEEEEEEEDDEVEGAE) has biased composition (acidic residues). A phosphoserine mark is found at Ser429 and Ser430. Over residues 451–462 (RYRDDGDEDYYK) the composition is skewed to basic and acidic residues. Over residues 506 to 515 (SDEESGDEEG) the composition is skewed to acidic residues. Ser554 carries the post-translational modification Phosphoserine.

Expressed in heart and oocytes, but not in granulosa cells (at protein level).

The protein localises to the nucleus. In terms of biological role, involved in repair of DNA damage following UV irradiation, acting either in the absence of ERCC6 or synergistically with ERCC6. Involved in the regulation of gene expression. In the absence of ERCC6, induces the expression of genes characteristic of interferon-like antiviral responses. This response is almost completely suppressed in the presence of ERCC6. In the presence of ERCC6, regulates the expression of genes involved in metabolism regulation, including IGFBP5 and IGFBP7. In vitro binds to PGBD3-related transposable elements, called MER85s; these non-autonomous 140 bp elements are characterized by the presence of PGBD3 terminal inverted repeats and the absence of internal transposase ORF. This Homo sapiens (Human) protein is Chimeric ERCC6-PGBD3 protein.